The primary structure comprises 295 residues: Nucleotide-binding protein LSEI_0959 (295 aa).

Residue 12-19 (GMSGAGKT) participates in ATP binding. Position 62–65 (62–65 (DLRS)) interacts with GTP.

Belongs to the RapZ-like family.

Displays ATPase and GTPase activities. This is Nucleotide-binding protein LSEI_0959 from Lacticaseibacillus paracasei (strain ATCC 334 / BCRC 17002 / CCUG 31169 / CIP 107868 / KCTC 3260 / NRRL B-441) (Lactobacillus paracasei).